The primary structure comprises 147 residues: NADH-quinone oxidoreductase subunit A (147 aa).

Transmembrane regions (helical) follow at residues 11-31 (IWPL…VMAL), 68-88 (LIAV…AWAV), and 93-113 (LGWP…AALA).

This sequence belongs to the complex I subunit 3 family. As to quaternary structure, NDH-1 is composed of 14 different subunits. Subunits NuoA, H, J, K, L, M, N constitute the membrane sector of the complex.

The protein resides in the cell inner membrane. It catalyses the reaction a quinone + NADH + 5 H(+)(in) = a quinol + NAD(+) + 4 H(+)(out). In terms of biological role, NDH-1 shuttles electrons from NADH, via FMN and iron-sulfur (Fe-S) centers, to quinones in the respiratory chain. The immediate electron acceptor for the enzyme in this species is believed to be ubiquinone. Couples the redox reaction to proton translocation (for every two electrons transferred, four hydrogen ions are translocated across the cytoplasmic membrane), and thus conserves the redox energy in a proton gradient. This Nitrosospira multiformis (strain ATCC 25196 / NCIMB 11849 / C 71) protein is NADH-quinone oxidoreductase subunit A.